A 185-amino-acid polypeptide reads, in one-letter code: Ribosome-recycling factor (185 aa).

The protein belongs to the RRF family.

It is found in the cytoplasm. In terms of biological role, responsible for the release of ribosomes from messenger RNA at the termination of protein biosynthesis. May increase the efficiency of translation by recycling ribosomes from one round of translation to another. This chain is Ribosome-recycling factor, found in Salmonella paratyphi A (strain ATCC 9150 / SARB42).